The following is a 476-amino-acid chain: ATP synthase subunit beta (476 aa).

Residue G154–T161 participates in ATP binding.

It belongs to the ATPase alpha/beta chains family. In terms of assembly, F-type ATPases have 2 components, CF(1) - the catalytic core - and CF(0) - the membrane proton channel. CF(1) has five subunits: alpha(3), beta(3), gamma(1), delta(1), epsilon(1). CF(0) has four main subunits: a(1), b(1), b'(1) and c(9-12).

The protein localises to the cell inner membrane. It carries out the reaction ATP + H2O + 4 H(+)(in) = ADP + phosphate + 5 H(+)(out). Produces ATP from ADP in the presence of a proton gradient across the membrane. The catalytic sites are hosted primarily by the beta subunits. The protein is ATP synthase subunit beta of Rhodopseudomonas palustris (strain BisA53).